Here is a 634-residue protein sequence, read N- to C-terminus: Ankyrin repeat protein OPG025 (634 aa).

6 ANK repeats span residues 36–69 (DGETPLKAYVTKKNNNIKNDVVILLLSSVDYKNI), 70–100 (NDFDIFEYLCSDNIDIDLLKLLISKGIEINS), 103–134 (NGINIVEKYATTSNPNVDVFKLLLDKGIPTCS), 175–211 (MGKTVLYYYIITRSQDGYATSLDVINYLISHKKEMRY), 307–337 (IQDLLLEYVSYHTVYINVIKCMIDEGATLYR), and 412–441 (HGCSILYHCIKSHSVSLVEWLIDNGADINI).

This sequence belongs to the orthopoxvirus OPG025 family. Interacts with components of host SCF complex CUL1 and SKP1 and components of the cullin deneddylation/COP9 signalosome complex subunits COPS7A and COPS7B.

Its function is as follows. Plays a role in the inhibition of host immune repsonse by counteracting the action of interferons on early events in the viral replication cycle. In Vaccinia virus (strain Copenhagen) (VACV), this protein is Ankyrin repeat protein OPG025 (OPG025).